Here is a 486-residue protein sequence, read N- to C-terminus: Arginine/agmatine antiporter (486 aa).

12 consecutive transmembrane segments (helical) span residues 12–32 (LGAI…GIFS), 41–61 (AGAG…FFIA), 85–105 (GFGP…QIFG), 129–149 (NTIP…FIVL), 161–181 (IGTI…AFFF), 211–231 (STML…VMSA), 242–262 (ATIL…LLPF), 296–316 (IGLL…VAEI), 341–361 (VSLY…YFST), 367–387 (MLSI…AFLV), 418–438 (IWLI…LLAL), and 461–481 (EVTK…LFST).

This sequence belongs to the amino acid-polyamine-organocation (APC) superfamily. Basic amino acid/polyamine antiporter (APA) (TC 2.A.3.2) family.

It localises to the cell inner membrane. Its function is as follows. Catalyzes the exchange of L-arginine for agmatine. The arginine uptake by the bacterium in the macrophage may be a virulence factor against the host innate immune response. This Chlamydia felis (strain Fe/C-56) (Chlamydophila felis) protein is Arginine/agmatine antiporter (aaxC).